Reading from the N-terminus, the 469-residue chain is Cysteine--tRNA ligase (469 aa).

C29 lines the Zn(2+) pocket. The 'HIGH' region signature appears at 31–41 (PTVYNYIHIGN). 3 residues coordinate Zn(2+): C210, H235, and E239. The 'KMSKS' region motif lies at 267 to 271 (KMSKS). Position 270 (K270) interacts with ATP.

It belongs to the class-I aminoacyl-tRNA synthetase family. In terms of assembly, monomer. Zn(2+) is required as a cofactor.

The protein localises to the cytoplasm. It carries out the reaction tRNA(Cys) + L-cysteine + ATP = L-cysteinyl-tRNA(Cys) + AMP + diphosphate. In Thermosipho africanus (strain TCF52B), this protein is Cysteine--tRNA ligase.